The chain runs to 407 residues: Nuclear hormone receptor family member nhr-86 (407 aa).

A DNA-binding region (nuclear receptor) is located at residues 21-96 (KSTCSICRED…VGMNPAGVQQ (76 aa)). 2 NR C4-type zinc fingers span residues 24–44 (CSIC…CRAC) and 60–79 (CRGN…CRSC). One can recognise an NR LBD domain in the interval 130 to 405 (AQSALVEDLH…KDFYDLVNGK (276 aa)). The AF-2 stretch occupies residues 394–405 (PPKDFYDLVNGK).

Belongs to the nuclear hormone receptor family. In terms of tissue distribution, expressed in intestinal epithelial cells, excretory gland cells and in several head neurons.

It is found in the nucleus. Nuclear receptor which acts as a transcription activator. Binds small molecule ligands, such as phenazine 1-carboxamide (PCN), a pathogen-derived metabolite, leading to modulation of innate immune responses against virulent pathogens. On exposure to exogenous PCN, P.aeruginosa and other xenobiotic immunostimulant such as R24, activates immune response genes, including irg-4, irg-5, mul-1, drd-50, cyp-35C1 and ugt-30, probably via direct interaction with their promoters, and independent of the p38 MAPK pmk-1 pathway. Exhibits higher affinity to R24 than PCN and thus induces stronger immune response. Binds its own promoter thereby autoregulating its expression in the head hypodermis and the pharynx. Possibly plays a role in lipid storage or catabolism. This Caenorhabditis elegans protein is Nuclear hormone receptor family member nhr-86 (nhr-86).